A 27-amino-acid chain; its full sequence is Conotoxin flf14a (27 aa).

2 cysteine pairs are disulfide-bonded: C6–C26 and C10–C22.

In terms of tissue distribution, expressed by the venom duct.

It is found in the secreted. This Conus anabathrum floridanus (Florida cone) protein is Conotoxin flf14a.